The chain runs to 920 residues: Glutamate receptor 2.2 (920 aa).

A signal peptide spans 1–24; sequence MKNSKLFFRFLFLFFFFCLESSRG. The Extracellular portion of the chain corresponds to 25–580; sequence QDNGKTQVNI…DKFSFLKPLS (556 aa). Asn-53, Asn-204, Asn-267, Asn-331, Asn-342, Asn-477, and Asn-542 each carry an N-linked (GlcNAc...) asparagine glycan. Residues 581-601 form a helical membrane-spanning segment; the sequence is IELWLTTLVFFFLVGISVWTL. The Cytoplasmic segment spans residues 602-610; it reads EHRVNSDFR. The helical transmembrane segment at 611–631 threads the bilayer; the sequence is GPANYQASTIFWFAFSTMVFA. Residues 632–635 are Cytoplasmic-facing; that stretch reads PRER. The helical transmembrane segment at 636–656 threads the bilayer; the sequence is VLSFGARSLVVTWYFVLLVLT. The Extracellular segment spans residues 657-830; that stretch reads QSYTASLASL…VTAIQLGVGS (174 aa). An N-linked (GlcNAc...) asparagine glycan is attached at Asn-702. The helical transmembrane segment at 831-851 threads the bilayer; sequence FWFLFLVVFVVCVLALGKFTF. Residues 852 to 920 lie on the Cytoplasmic side of the membrane; it reads CFLWKTKGKD…QVNQTDPDCL (69 aa).

This sequence belongs to the glutamate-gated ion channel (TC 1.A.10.1) family. In terms of assembly, may form heteromers. In terms of tissue distribution, expressed predominantly in roots.

It localises to the membrane. In terms of biological role, glutamate-gated receptor that probably acts as a non-selective cation channel. May be involved in light-signal transduction and calcium homeostasis via the regulation of calcium influx into cells. This is Glutamate receptor 2.2 (GLR2.2) from Arabidopsis thaliana (Mouse-ear cress).